Reading from the N-terminus, the 280-residue chain is Ribosomal RNA-processing protein 7 homolog A (280 aa).

The region spanning 59 to 159 (RTLFVLNVPP…SGIHKWISDY (101 aa)) is the RRM domain. The residue at position 99 (S99) is a Phosphoserine.

Belongs to the RRP7 family. As to quaternary structure, part of the small subunit (SSU) processome, composed of more than 70 proteins and the RNA chaperone small nucleolar RNA (snoRNA) U3. Interacts with NOL6; required for NOL6 localization to nucleolus. As to expression, expressed in the apical radial glial cells in the developing brain.

It is found in the nucleus. The protein localises to the nucleolus. The protein resides in the cell projection. Its subcellular location is the cilium. It localises to the cytoplasm. It is found in the cytoskeleton. The protein localises to the microtubule organizing center. The protein resides in the centrosome. Its function is as follows. Nucleolar protein that is involved in ribosomal RNA (rRNA) processing. Also plays a role in primary cilia resorption, and cell cycle progression in neurogenesis and neocortex development. Part of the small subunit (SSU) processome, first precursor of the small eukaryotic ribosomal subunit. During the assembly of the SSU processome in the nucleolus, many ribosome biogenesis factors, an RNA chaperone and ribosomal proteins associate with the nascent pre-rRNA and work in concert to generate RNA folding, modifications, rearrangements and cleavage as well as targeted degradation of pre-ribosomal RNA by the RNA exosome. The sequence is that of Ribosomal RNA-processing protein 7 homolog A from Homo sapiens (Human).